We begin with the raw amino-acid sequence, 372 residues long: Tetraacyldisaccharide 4'-kinase (372 aa).

Position 60-67 (60-67 (TVGGSGKT)) interacts with ATP.

This sequence belongs to the LpxK family.

It catalyses the reaction a lipid A disaccharide + ATP = a lipid IVA + ADP + H(+). It participates in glycolipid biosynthesis; lipid IV(A) biosynthesis; lipid IV(A) from (3R)-3-hydroxytetradecanoyl-[acyl-carrier-protein] and UDP-N-acetyl-alpha-D-glucosamine: step 6/6. Transfers the gamma-phosphate of ATP to the 4'-position of a tetraacyldisaccharide 1-phosphate intermediate (termed DS-1-P) to form tetraacyldisaccharide 1,4'-bis-phosphate (lipid IVA). The chain is Tetraacyldisaccharide 4'-kinase from Psychrobacter cryohalolentis (strain ATCC BAA-1226 / DSM 17306 / VKM B-2378 / K5).